Here is a 368-residue protein sequence, read N- to C-terminus: Probable magnesium transporter NIPA3 (368 aa).

At 1 to 18 (MASLSGSWRDAYKGMSSD) the chain is on the extracellular side. The chain crosses the membrane as a helical span at residues 19–39 (NIKGLVLALSSSLFIGASFIV). At 40 to 66 (KKKGLKRAGASGLRAGSGGYSYLLEPL) the chain is on the cytoplasmic side. The chain crosses the membrane as a helical span at residues 67 to 87 (WWVGMITMIVGEIANFAAYAF). The Extracellular portion of the chain corresponds to 88–90 (APA). Residues 91–111 (ILVTPLGALSIIISAALAHVI) traverse the membrane as a helical segment. Residues 112 to 115 (LHEK) are Cytoplasmic-facing. A helical membrane pass occupies residues 116–136 (LHTFGLLGCVLCVVGSITIVL). At 137-157 (HAPQEQEIDSVLQVWNLATEP) the chain is on the extracellular side. A helical membrane pass occupies residues 158 to 178 (AFLLYAAAVVGAAIILIVQFV). Over 179-189 (PQYGQSHVMVY) the chain is Cytoplasmic. The helical transmembrane segment at 190 to 210 (IGVCSLVGSLSVMSVKALGIA) threads the bilayer. Residues 211–220 (LKLTFSGMNQ) lie on the Extracellular side of the membrane. A helical transmembrane segment spans residues 221 to 241 (LIYPQTWVFTLIVLTCVITQM). Residues 242–255 (NYLNKALDTFNTAV) are Cytoplasmic-facing. Residues 256-276 (VSPIYYVMFTSLTILASVIMF) form a helical membrane-spanning segment. Residues 277–283 (KDWDRQD) are Extracellular-facing. The helical transmembrane segment at 284–304 (GTQIVTELCGFVTILSGTFLL) threads the bilayer. Residues 305-368 (HKTKDMVDGS…ILPQDGPEAV (64 aa)) lie on the Cytoplasmic side of the membrane.

It belongs to the NIPA (TC 2.A.7) family. As to quaternary structure, homodimer.

It localises to the cell membrane. The protein localises to the early endosome. In terms of biological role, acts as a Mg(2+) transporter. Can also transport other divalent cations such as Fe(2+), Sr(2+), Ba(2+), Mn(2+) and Co(2+) but to a much less extent than Mg(2+). This is Probable magnesium transporter NIPA3 from Arabidopsis thaliana (Mouse-ear cress).